The following is a 182-amino-acid chain: NAD(P)H-quinone oxidoreductase subunit J (182 aa).

This sequence belongs to the complex I 30 kDa subunit family. NDH-1 can be composed of about 15 different subunits; different subcomplexes with different compositions have been identified which probably have different functions.

It is found in the cellular thylakoid membrane. It carries out the reaction a plastoquinone + NADH + (n+1) H(+)(in) = a plastoquinol + NAD(+) + n H(+)(out). The enzyme catalyses a plastoquinone + NADPH + (n+1) H(+)(in) = a plastoquinol + NADP(+) + n H(+)(out). Its function is as follows. NDH-1 shuttles electrons from an unknown electron donor, via FMN and iron-sulfur (Fe-S) centers, to quinones in the respiratory and/or the photosynthetic chain. The immediate electron acceptor for the enzyme in this species is believed to be plastoquinone. Couples the redox reaction to proton translocation, and thus conserves the redox energy in a proton gradient. Cyanobacterial NDH-1 also plays a role in inorganic carbon-concentration. The chain is NAD(P)H-quinone oxidoreductase subunit J from Synechococcus sp. (strain WH7803).